The following is a 696-amino-acid chain: MARLRVYELARQLEMDTRELMKELHELGIEIKSHMSYIDEETVNLLLEMYGTQEEEEELIEEYEEYEEIDEEVNGKHFKNKEGSLEKLQTNKKKNSVKITEEDLKLDKFAEKIGIPQNKIIQDFFMKGEILKPGQSLNLQLAKKIAKMYDVRISFENEEKEEVIENPLIEIEKYFEEKYKNPENLKERPPVVTVMGHVDHGKTTLLDYIRNTRVAEREEGGITQSIGAYQVEVNGKKITFIDTPGHEIFTEMRARGAQATDIVVLVVAADDGVMPQTIEAYNHAKSANVPIIVAINKIDKPNANVEKTKQELVNKLNLIPEEWGGDTIVVPISAKKGQNVDTLLEMILLVAEMQEIKGIPDGPVRAVTIESKLDKGFGPVANVIVKDGILKIGDYIISGKVMGKVKALVNDQGKRVKEAGPSTPVMIVGFEELPDSHGIVYSVDSLDKAREISEKIREIEQKELRRKRHMKLEEILKMMEQSERKELRLVLKADTQGSLMALSGAINKLRSEEISINIIHSGVGSITVSDVMLATASDAIILGFRVKADSQARKMAEAEGIQIKTYTIVYKLIEELQAALEGMLEPEEIEEITGRGEIKKVFKIKKVGSIAGVQMIEGYVEKDGLVKVYRSGKLVYEGKIESLKHYQQDVKRVDAPQECGIKLENFDDIKEGDELEFSVLKKVARKLTFEEDKGEK.

In terms of domain architecture, tr-type G spans 187–361 (ERPPVVTVMG…EMQEIKGIPD (175 aa)). The interval 196–203 (GHVDHGKT) is G1. 196–203 (GHVDHGKT) contacts GTP. The segment at 221–225 (GITQS) is G2. Residues 242 to 245 (DTPG) form a G3 region. Residues 242–246 (DTPGH) and 296–299 (NKID) each bind GTP. Residues 296 to 299 (NKID) are G4. A G5 region spans residues 333–335 (SAK).

This sequence belongs to the TRAFAC class translation factor GTPase superfamily. Classic translation factor GTPase family. IF-2 subfamily.

Its subcellular location is the cytoplasm. Its function is as follows. One of the essential components for the initiation of protein synthesis. Protects formylmethionyl-tRNA from spontaneous hydrolysis and promotes its binding to the 30S ribosomal subunits. Also involved in the hydrolysis of GTP during the formation of the 70S ribosomal complex. This chain is Translation initiation factor IF-2, found in Thermosipho africanus (strain TCF52B).